We begin with the raw amino-acid sequence, 199 residues long: Superoxide dismutase [Mn/Fe] 2 (199 aa).

Fe(3+) contacts are provided by His27, His81, Asp161, and His165. Mn(2+)-binding residues include His27, His81, Asp161, and His165.

Belongs to the iron/manganese superoxide dismutase family. In terms of assembly, homodimer. Can also form a heterodimer with SodA. Requires Mn(2+) as cofactor. It depends on Fe(3+) as a cofactor.

The catalysed reaction is 2 superoxide + 2 H(+) = H2O2 + O2. Its function is as follows. Destroys superoxide anion radicals which are normally produced within the cells and which are toxic to biological systems. Catalyzes the dismutation of superoxide anion radicals into O2 and H2O2 by successive reduction and oxidation of the transition metal ion at the active site. The sequence is that of Superoxide dismutase [Mn/Fe] 2 (sodM) from Staphylococcus aureus (strain bovine RF122 / ET3-1).